Reading from the N-terminus, the 365-residue chain is Phosphatidylcholine:ceramide cholinephosphotransferase 2 (365 aa).

Residues 9–50 (LEGHLESQTNDSTNTYTSPTEAVEEEGKNGKGKPKTLSNGLR) form a disordered region. The span at 14 to 28 (ESQTNDSTNTYTSPT) shows a compositional bias: polar residues. Helical transmembrane passes span 80 to 100 (GIAFVYALFNLILTTVMITVV), 128 to 148 (FSVSEINGMVLVGLWITQWLF), 159 to 179 (FFFIMGTLYLYRCITMYVTTL), 219 to 239 (ILCGDFLFSGHTVVLTLTYLF), and 248 to 268 (FWWYHLVCWLLSAAGIICILV). H229 is an active-site residue. Active-site residues include H272 and D276. Residues 273-290 (YTVDVIIAYYITTRLFWW) traverse the membrane as a helical segment. Residues 291-365 (YHSMANEKNL…KIGEDNEKST (75 aa)) lie on the Cytoplasmic side of the membrane. 4 S-palmitoyl cysteine lipidation sites follow: C331, C332, C343, and C348.

The protein belongs to the sphingomyelin synthase family. Palmitoylated on Cys-331, Cys-332, Cys-343 and Cys-348; which plays an important role in plasma membrane localization. As to expression, highest expression is detected in cortical bone, followed by vertebrae, kidney and liver. Expression levels are very low in spleen, muscle, heart, brown fat and thymus. Expressed in macrophages.

The protein resides in the cell membrane. Its subcellular location is the golgi apparatus membrane. The enzyme catalyses an N-acylsphing-4-enine + a 1,2-diacyl-sn-glycero-3-phosphocholine = a sphingomyelin + a 1,2-diacyl-sn-glycerol. It catalyses the reaction an N-acylsphinganine + a 1,2-diacyl-sn-glycero-3-phosphocholine = an N-acylsphinganine-1-phosphocholine + a 1,2-diacyl-sn-glycerol. It carries out the reaction an N-acyl-(4R)-4-hydroxysphinganine + a 1,2-diacyl-sn-glycero-3-phosphocholine = an N-acyl-(4R)-4-hydroxysphinganine-phosphocholine + a 1,2-diacyl-sn-glycerol. The catalysed reaction is an N-acylsphing-4-enine + a 1,2-diacyl-sn-glycero-3-phosphoethanolamine = an N-acylsphing-4-enine 1-phosphoethanolamine + a 1,2-diacyl-sn-glycerol. The enzyme catalyses an N-acylsphinganine + a 1,2-diacyl-sn-glycero-3-phosphoethanolamine = an N-acylsphinganine-1-phosphoethanolamine + a 1,2-diacyl-sn-glycerol. It catalyses the reaction an N-acyl-(4R)-4-hydroxysphinganine + a 1,2-diacyl-sn-glycero-3-phosphoethanolamine = an N-acyl-(4R)-4-hydroxysphinganine-1-phosphoethanolamine + a 1,2-diacyl-sn-glycerol. It carries out the reaction 1,2-dihexadecanoyl-sn-glycero-3-phosphocholine + an N-acylsphing-4-enine = 1,2-dihexadecanoyl-sn-glycerol + a sphingomyelin. The catalysed reaction is 1-(9Z-octadecenoyl)-2-acyl-sn-3-glycerol + a sphingomyelin = a 1-(9Z-octadecenoyl)-2-acyl-sn-glycero-3-phosphocholine + an N-acylsphing-4-enine. The enzyme catalyses N-hexadecanoylsphinganine + a 1,2-diacyl-sn-glycero-3-phosphocholine = N-hexadecanoyl-sphinganine-1-phosphocholine + a 1,2-diacyl-sn-glycerol. It catalyses the reaction N-hexadecanoyl-(4R)-hydroxysphinganine + a 1,2-diacyl-sn-glycero-3-phosphocholine = N-hexadecanoyl-(4R)-hydroxysphinganine-phosphocholine + a 1,2-diacyl-sn-glycerol. It carries out the reaction N-hexadecanoylsphinganine + a 1,2-diacyl-sn-glycero-3-phosphoethanolamine = N-hexadecanoyl-sphinganine-1-phosphoethanolamine + a 1,2-diacyl-sn-glycerol. The catalysed reaction is N-hexadecanoyl-(4R)-hydroxysphinganine + a 1,2-diacyl-sn-glycero-3-phosphoethanolamine = N-hexadecanoyl-(4R)-hydroxysphinganine-1-phosphoethanolamine + a 1,2-diacyl-sn-glycerol. It functions in the pathway sphingolipid metabolism. Functionally, sphingomyelin synthase that primarily contributes to sphingomyelin synthesis and homeostasis at the plasma membrane. Catalyzes the reversible transfer of phosphocholine moiety in sphingomyelin biosynthesis: in the forward reaction transfers phosphocholine head group of phosphatidylcholine (PC) on to ceramide (CER) to form ceramide phosphocholine (sphingomyelin, SM) and diacylglycerol (DAG) as by-product, and in the reverse reaction transfers phosphocholine from SM to DAG to form PC and CER. The direction of the reaction appears to depend on the levels of CER and DAG in the plasma membrane. Does not use free phosphorylcholine or CDP-choline as donors. Can also transfer phosphoethanolamine head group of phosphatidylethanolamine (PE) on to ceramide (CER) to form ceramide phosphoethanolamine (CPE). Regulates receptor-mediated signal transduction via mitogenic DAG and proapoptotic CER, as well as via SM, a structural component of membrane rafts that serve as platforms for signal transduction and protein sorting. To a lesser extent, plays a role in secretory transport via regulation of DAG pool at the Golgi apparatus and its downstream effects on PRKD1. Required for normal bone matrix mineralization. This chain is Phosphatidylcholine:ceramide cholinephosphotransferase 2 (Sgms2), found in Mus musculus (Mouse).